Consider the following 66-residue polypeptide: Small ribosomal subunit protein eS27 (66 aa).

Cys-21, Cys-24, Cys-40, and Cys-43 together coordinate Zn(2+). The C4-type zinc finger occupies 21 to 43 (CPVCGNEQVIFSHATFPARCLVC).

The protein belongs to the eukaryotic ribosomal protein eS27 family. In terms of assembly, part of the 30S ribosomal subunit. It depends on Zn(2+) as a cofactor.

The polypeptide is Small ribosomal subunit protein eS27 (Hyperthermus butylicus (strain DSM 5456 / JCM 9403 / PLM1-5)).